We begin with the raw amino-acid sequence, 380 residues long: DNA replication and repair protein RecF (380 aa).

Residue 30 to 37 coordinates ATP; sequence GENAQGKT.

Belongs to the RecF family.

Its subcellular location is the cytoplasm. The RecF protein is involved in DNA metabolism; it is required for DNA replication and normal SOS inducibility. RecF binds preferentially to single-stranded, linear DNA. It also seems to bind ATP. This chain is DNA replication and repair protein RecF, found in Synechococcus sp. (strain JA-2-3B'a(2-13)) (Cyanobacteria bacterium Yellowstone B-Prime).